A 500-amino-acid chain; its full sequence is Probable serine carboxypeptidase CPVL (500 aa).

A signal peptide spans 1-23; the sequence is MKVSLSFLLTILIVIITIKVNLS. Asn-110 and Asn-161 each carry an N-linked (GlcNAc...) asparagine glycan. The active site involves Ser-233. N-linked (GlcNAc...) asparagine glycosylation is found at Asn-333 and Asn-360. Active-site residues include Asp-414 and His-474.

Belongs to the peptidase S10 family.

It is found in the secreted. In terms of biological role, may be involved in the digestion of phagocytosed particles in the lysosome, participation in an inflammatory protease cascade, and trimming of peptides for antigen presentation. The chain is Probable serine carboxypeptidase CPVL (cpvl) from Dictyostelium discoideum (Social amoeba).